The primary structure comprises 403 residues: Betaine--homocysteine S-methyltransferase 1 (403 aa).

The Hcy-binding domain occupies 8-311 (KGLLERLDAG…YHTRAIAEEL (304 aa)). C214, C296, and C297 together coordinate Zn(2+).

In terms of assembly, homotetramer. Zn(2+) is required as a cofactor.

Its subcellular location is the cytoplasm. It catalyses the reaction L-homocysteine + glycine betaine = N,N-dimethylglycine + L-methionine. It participates in amine and polyamine degradation; betaine degradation; sarcosine from betaine: step 1/2. Its pathway is amino-acid biosynthesis; L-methionine biosynthesis via de novo pathway; L-methionine from L-homocysteine (BhmT route): step 1/1. Involved in the regulation of homocysteine metabolism. Converts betaine and homocysteine to dimethylglycine and methionine, respectively. This reaction is also required for the irreversible oxidation of choline. The sequence is that of Betaine--homocysteine S-methyltransferase 1 (bhmt) from Xenopus tropicalis (Western clawed frog).